A 296-amino-acid chain; its full sequence is 4-hydroxy-tetrahydrodipicolinate synthase (296 aa).

T49 is a pyruvate binding site. The active-site Proton donor/acceptor is the Y137. K166 acts as the Schiff-base intermediate with substrate in catalysis. I208 contacts pyruvate.

It belongs to the DapA family. In terms of assembly, homotetramer; dimer of dimers.

The protein localises to the cytoplasm. It catalyses the reaction L-aspartate 4-semialdehyde + pyruvate = (2S,4S)-4-hydroxy-2,3,4,5-tetrahydrodipicolinate + H2O + H(+). The protein operates within amino-acid biosynthesis; L-lysine biosynthesis via DAP pathway; (S)-tetrahydrodipicolinate from L-aspartate: step 3/4. Its function is as follows. Catalyzes the condensation of (S)-aspartate-beta-semialdehyde [(S)-ASA] and pyruvate to 4-hydroxy-tetrahydrodipicolinate (HTPA). In Azobacteroides pseudotrichonymphae genomovar. CFP2, this protein is 4-hydroxy-tetrahydrodipicolinate synthase.